Reading from the N-terminus, the 226-residue chain is UPF0502 protein Gbem_0194 (226 aa).

Belongs to the UPF0502 family.

The chain is UPF0502 protein Gbem_0194 from Citrifermentans bemidjiense (strain ATCC BAA-1014 / DSM 16622 / JCM 12645 / Bem) (Geobacter bemidjiensis).